Reading from the N-terminus, the 413-residue chain is MNIYAVGGAIRDALLGVPVQDRDYVVVGATPEQMAAQGFRPVGKDFPVFLHPDTQEEYALARTERKTAAGYHGFQFYYAPDVTLDEDLARRDLTINAMAREVSPDGTLIGPVIDPFDGQADLRARVFRHVSDAFVEDPVRILRIARFAARFADFTVADETLALMRRMVDAGEADALVPERVWQEIARGLMEATPSRMFDVLRECGALARVLPEVDALWGVPQRADYHPEVDTGVHVMMVVDYAAKQGYSLPVRFAALTHDLGKATTPADVLPRHVGHEGRSVELIKPLCERLRVPNECRDLALVVAREHGNLHRVMEMGAAALVRLFERSDALRKPARFAEMLQACESDARGRLGLDTQPYPQAERLRVALVAARSVDAGAIARGIGNDAMQIKDAVHRARIDAVKQALAIAE.

ATP contacts are provided by Gly8 and Arg11. CTP is bound by residues Gly8 and Arg11. The Mg(2+) site is built by Asp21 and Asp23. ATP-binding residues include Arg91, Arg143, and Arg146. The CTP site is built by Arg91, Arg143, and Arg146. The HD domain occupies 232–333; sequence TGVHVMMVVD…VRLFERSDAL (102 aa).

This sequence belongs to the tRNA nucleotidyltransferase/poly(A) polymerase family. Bacterial CCA-adding enzyme type 1 subfamily. In terms of assembly, monomer. Can also form homodimers and oligomers. Requires Mg(2+) as cofactor. Ni(2+) serves as cofactor.

It catalyses the reaction a tRNA precursor + 2 CTP + ATP = a tRNA with a 3' CCA end + 3 diphosphate. The catalysed reaction is a tRNA with a 3' CCA end + 2 CTP + ATP = a tRNA with a 3' CCACCA end + 3 diphosphate. In terms of biological role, catalyzes the addition and repair of the essential 3'-terminal CCA sequence in tRNAs without using a nucleic acid template. Adds these three nucleotides in the order of C, C, and A to the tRNA nucleotide-73, using CTP and ATP as substrates and producing inorganic pyrophosphate. tRNA 3'-terminal CCA addition is required both for tRNA processing and repair. Also involved in tRNA surveillance by mediating tandem CCA addition to generate a CCACCA at the 3' terminus of unstable tRNAs. While stable tRNAs receive only 3'-terminal CCA, unstable tRNAs are marked with CCACCA and rapidly degraded. This Burkholderia vietnamiensis (strain G4 / LMG 22486) (Burkholderia cepacia (strain R1808)) protein is Multifunctional CCA protein.